Reading from the N-terminus, the 840-residue chain is Serotype-specific mannosyltransferase WbdA (840 aa).

The alpha-(1-&gt;2)-mannosyltransferase stretch occupies residues 2–399 (HILIDVQGYQ…WANTAHLAIE (398 aa)). The tract at residues 456–829 (KLLVDISVLA…WKQSAEFLLK (374 aa)) is alpha-(1-&gt;3)-mannosyltransferase.

This sequence belongs to the glycosyltransferase group 1 family. Glycosyltransferase 4 subfamily. Monomer. Interacts with the C-terminal region of WbdD. Interacts with WbdD via a surface-exposed alpha-helix in the C-terminal mannosyltransferase domain. However, the C-terminal domain is unable to interact with WbdD in the absence of its N-terminal partner.

It localises to the cell inner membrane. It catalyses the reaction [alpha-D-Man-(1-&gt;3)-alpha-D-Man-(1-&gt;3)-alpha-D-Man-(1-&gt;2)-alpha-D-Man-(1-&gt;2)](n)-alpha-D-Man-(1-&gt;3)-alpha-D-Man-(1-&gt;3)-alpha-D-Man-(1-&gt;3)-alpha-D-GlcNAc-di-trans,octa-cis-undecaprenyl diphosphate + 2 GDP-alpha-D-mannose = alpha-D-Man-(1-&gt;2)-alpha-D-Man-(1-&gt;2)-[alpha-D-Man-(1-&gt;3)-alpha-D-Man-(1-&gt;3)-alpha-D-Man-(1-&gt;2)-alpha-D-Man-(1-&gt;2)](n)-alpha-D-Man-(1-&gt;3)-alpha-D-Man-(1-&gt;3)-alpha-D-Man-(1-&gt;3)-alpha-D-GlcNAc-di-trans,octa-cis-undecaprenyl diphosphate + 2 GDP + 2 H(+). It carries out the reaction alpha-D-Man-(1-&gt;2)-alpha-D-Man-(1-&gt;2)-[alpha-D-Man-(1-&gt;3)-alpha-D-Man-(1-&gt;3)-alpha-D-Man-(1-&gt;2)-alpha-D-Man-(1-&gt;2)](n)-alpha-D-Man-(1-&gt;3)-alpha-D-Man-(1-&gt;3)-alpha-D-Man-(1-&gt;3)-alpha-D-GlcNAc-di-trans,octa-cis-undecaprenyl diphosphate + 2 GDP-alpha-D-mannose = [alpha-D-Man-(1-&gt;3)-alpha-D-Man-(1-&gt;3)-alpha-D-Man-(1-&gt;2)-alpha-D-Man-(1-&gt;2)](n+1)-alpha-D-Man-(1-&gt;3)-alpha-D-Man-(1-&gt;3)-alpha-D-Man-(1-&gt;3)-alpha-D-GlcNAc-di-trans,octa-cis-undecaprenyl diphosphate + 2 GDP + 2 H(+). The protein operates within bacterial outer membrane biogenesis; LPS O-antigen biosynthesis. Its activity is regulated as follows. The alpha-(1-&gt;2)-mannosyltransferase activity of the N-terminal domain is regulated by the activity of the C-terminal alpha-(1-&gt;3)-mannosyltransferase. The relative concentration of WbdA and WbdD is critical in determining the O polysaccharide (OPS) modal chain length. OPS chain length increases with increasing concentration of WbdA, but the maximum length does not increase beyond the wild-type modal length, despite substantial increases in WbdA concentration. Functionally, mannosyltransferase involved in the biosynthesis of the repeat unit of the lipopolysaccharide (LPS) O-antigen region. Catalyzes the polymerization of a tetrasaccharide repeat unit containing two alpha-(1-&gt;3)- and two alpha-(1-&gt;2)-linked mannopyranose residues. Extension is terminated by the action of the chain terminator bifunctional methyltransferase/kinase WbdD. The chain is Serotype-specific mannosyltransferase WbdA from Escherichia coli.